The following is a 212-amino-acid chain: External core antigen (212 aa).

A signal peptide spans M1–A19. Residues G25 to L27 are HBEAG. Residues R179–C212 are disordered. The span at Q180 to S205 shows a compositional bias: basic residues. A 1; half-length repeat occupies T184–P190. Positions T184–Q206 are 3 X 8 AA repeats of S-P-R-R-R-R-S-Q. The propeptide occupies T184–C212. Tandem repeats lie at residues S191–Q198 and S199–Q206.

The protein belongs to the orthohepadnavirus precore antigen family. As to quaternary structure, homodimerizes. Phosphorylated. In terms of processing, cleaved by host furin.

It localises to the secreted. The protein resides in the host nucleus. Functionally, may regulate immune response to the intracellular capsid in acting as a T-cell tolerogen, by having an immunoregulatory effect which prevents destruction of infected cells by cytotoxic T-cells. This immune regulation may predispose to chronicity during perinatal infections and prevent severe liver injury during adult infections. In Hepatitis B virus genotype D subtype ayw (isolate Australia/AustKW/1991) (HBV-D), this protein is External core antigen.